We begin with the raw amino-acid sequence, 310 residues long: Ribose-phosphate pyrophosphokinase (310 aa).

ATP is bound by residues 34–36 (DQE) and 93–94 (RQ). Mg(2+)-binding residues include His127 and Asp167. Residue Lys190 is part of the active site. D-ribose 5-phosphate is bound by residues Arg192, Asp216, and 220 to 224 (DSGGT).

It belongs to the ribose-phosphate pyrophosphokinase family. Class I subfamily. In terms of assembly, homohexamer. Mg(2+) is required as a cofactor.

Its subcellular location is the cytoplasm. It catalyses the reaction D-ribose 5-phosphate + ATP = 5-phospho-alpha-D-ribose 1-diphosphate + AMP + H(+). Its pathway is metabolic intermediate biosynthesis; 5-phospho-alpha-D-ribose 1-diphosphate biosynthesis; 5-phospho-alpha-D-ribose 1-diphosphate from D-ribose 5-phosphate (route I): step 1/1. Functionally, involved in the biosynthesis of the central metabolite phospho-alpha-D-ribosyl-1-pyrophosphate (PRPP) via the transfer of pyrophosphoryl group from ATP to 1-hydroxyl of ribose-5-phosphate (Rib-5-P). In Rhizobium meliloti (strain 1021) (Ensifer meliloti), this protein is Ribose-phosphate pyrophosphokinase.